Consider the following 726-residue polypeptide: Catalase-peroxidase (726 aa).

The segment at residues 98–226 (WHSAGTYRMQ…LAAVHMGLIY (129 aa)) is a cross-link (tryptophyl-tyrosyl-methioninium (Trp-Tyr) (with M-252)). His-99 functions as the Proton acceptor in the catalytic mechanism. A cross-link (tryptophyl-tyrosyl-methioninium (Tyr-Met) (with W-98)) is located at residues 226–252 (YVNPEGVNGQPDPARTAQHVRETFARM). His-267 serves as a coordination point for heme b.

The protein belongs to the peroxidase family. Peroxidase/catalase subfamily. Homodimer or homotetramer. The cofactor is heme b. Post-translationally, formation of the three residue Trp-Tyr-Met cross-link is important for the catalase, but not the peroxidase activity of the enzyme.

It carries out the reaction H2O2 + AH2 = A + 2 H2O. The enzyme catalyses 2 H2O2 = O2 + 2 H2O. Functionally, bifunctional enzyme with both catalase and broad-spectrum peroxidase activity. The polypeptide is Catalase-peroxidase (Roseobacter denitrificans (strain ATCC 33942 / OCh 114) (Erythrobacter sp. (strain OCh 114))).